The chain runs to 904 residues: Translation initiation factor IF-2 (904 aa).

Disordered regions lie at residues 103 to 122 (YVKS…PDEE), 137 to 252 (NLEE…MVAG), and 267 to 315 (HLSA…FERP). Positions 137–177 (NLEEQQRLAESDRVRDEAIQRKREEEQAAKDRAEAERKAAE) are enriched in basic and acidic residues. Composition is skewed to low complexity over residues 178–230 (EAAA…AAPA) and 280–293 (RGKP…SSSR). A tr-type G domain is found at 403-572 (SRPPVVTIMG…SLQAEVLELK (170 aa)). The G1 stretch occupies residues 412–419 (GHVDHGKT). 412-419 (GHVDHGKT) serves as a coordination point for GTP. The segment at 437 to 441 (GITQH) is G2. Residues 458–461 (DTPG) form a G3 region. Residues 458 to 462 (DTPGH) and 512 to 515 (NKID) contribute to the GTP site. Positions 512 to 515 (NKID) are G4. Positions 548-550 (SAK) are G5.

The protein belongs to the TRAFAC class translation factor GTPase superfamily. Classic translation factor GTPase family. IF-2 subfamily.

It is found in the cytoplasm. Functionally, one of the essential components for the initiation of protein synthesis. Protects formylmethionyl-tRNA from spontaneous hydrolysis and promotes its binding to the 30S ribosomal subunits. Also involved in the hydrolysis of GTP during the formation of the 70S ribosomal complex. The sequence is that of Translation initiation factor IF-2 from Xanthomonas euvesicatoria pv. vesicatoria (strain 85-10) (Xanthomonas campestris pv. vesicatoria).